A 95-amino-acid chain; its full sequence is Aspartyl/glutamyl-tRNA(Asn/Gln) amidotransferase subunit C (95 aa).

This sequence belongs to the GatC family. Heterotrimer of A, B and C subunits.

The catalysed reaction is L-glutamyl-tRNA(Gln) + L-glutamine + ATP + H2O = L-glutaminyl-tRNA(Gln) + L-glutamate + ADP + phosphate + H(+). It catalyses the reaction L-aspartyl-tRNA(Asn) + L-glutamine + ATP + H2O = L-asparaginyl-tRNA(Asn) + L-glutamate + ADP + phosphate + 2 H(+). Allows the formation of correctly charged Asn-tRNA(Asn) or Gln-tRNA(Gln) through the transamidation of misacylated Asp-tRNA(Asn) or Glu-tRNA(Gln) in organisms which lack either or both of asparaginyl-tRNA or glutaminyl-tRNA synthetases. The reaction takes place in the presence of glutamine and ATP through an activated phospho-Asp-tRNA(Asn) or phospho-Glu-tRNA(Gln). The chain is Aspartyl/glutamyl-tRNA(Asn/Gln) amidotransferase subunit C from Gluconobacter oxydans (strain 621H) (Gluconobacter suboxydans).